The following is a 161-amino-acid chain: Crossover junction endodeoxyribonuclease RuvC (161 aa).

Active-site residues include Asp7, Glu67, and Asp139. 3 residues coordinate Mg(2+): Asp7, Glu67, and Asp139.

Belongs to the RuvC family. In terms of assembly, homodimer which binds Holliday junction (HJ) DNA. The HJ becomes 2-fold symmetrical on binding to RuvC with unstacked arms; it has a different conformation from HJ DNA in complex with RuvA. In the full resolvosome a probable DNA-RuvA(4)-RuvB(12)-RuvC(2) complex forms which resolves the HJ. Requires Mg(2+) as cofactor.

It localises to the cytoplasm. The enzyme catalyses Endonucleolytic cleavage at a junction such as a reciprocal single-stranded crossover between two homologous DNA duplexes (Holliday junction).. Its function is as follows. The RuvA-RuvB-RuvC complex processes Holliday junction (HJ) DNA during genetic recombination and DNA repair. Endonuclease that resolves HJ intermediates. Cleaves cruciform DNA by making single-stranded nicks across the HJ at symmetrical positions within the homologous arms, yielding a 5'-phosphate and a 3'-hydroxyl group; requires a central core of homology in the junction. The consensus cleavage sequence is 5'-(A/T)TT(C/G)-3'. Cleavage occurs on the 3'-side of the TT dinucleotide at the point of strand exchange. HJ branch migration catalyzed by RuvA-RuvB allows RuvC to scan DNA until it finds its consensus sequence, where it cleaves and resolves the cruciform DNA. This chain is Crossover junction endodeoxyribonuclease RuvC, found in Syntrophotalea carbinolica (strain DSM 2380 / NBRC 103641 / GraBd1) (Pelobacter carbinolicus).